The following is a 191-amino-acid chain: Transcriptional regulator MET32 (191 aa).

Positions 70–96 (KKENALPKPPKSSKSKPQDRRNSTGEK) are disordered. Basic and acidic residues predominate over residues 85–96 (KPQDRRNSTGEK). A C2H2-type 1 zinc finger spans residues 98–120 (FKCAKCSLEFSRSSDLRRHEKTH). A C2H2-type 2; atypical zinc finger spans residues 126–150 (NICPQCGKGFARKDALKRHYDTLTC).

As to quaternary structure, interacts with MET4 and MET28.

The protein localises to the cytoplasm. Its subcellular location is the nucleus. In terms of biological role, auxiliary transcriptional regulator of sulfur amino acid metabolism. Involved in the transcriptional activation of MET28. This is Transcriptional regulator MET32 (MET32) from Saccharomyces cerevisiae (strain ATCC 204508 / S288c) (Baker's yeast).